The chain runs to 209 residues: Nascent polypeptide-associated complex subunit alpha (209 aa).

Positions 1-21 (MSNPRVEELPDEEPKKTTVQE) are enriched in basic and acidic residues. Disordered stretches follow at residues 1–51 (MSNP…HNRN) and 121–175 (QLAS…DKDI). Residues 22–36 (HEDDSSDDSEVEEVG) show a composition bias toward acidic residues. In terms of domain architecture, NAC-A/B spans 49 to 114 (NRNEKKARKA…AKIEDVNAAA (66 aa)). Residues 127–150 (AEDHSGHNHGEPSKAVEADEKKED) are compositionally biased toward basic and acidic residues. Acidic residues predominate over residues 151–166 (KEDDEDEEEEEEEEVD). Residues 170–209 (LEDKDIELVMTQANVSRNKAVKALKENDNDIVNSIMALSI) enclose the UBA domain.

Belongs to the NAC-alpha family. Part of the nascent polypeptide-associated complex (NAC), consisting of EGD2 and EGD1. NAC associates with ribosomes via EGD1.

It localises to the cytoplasm. The protein localises to the nucleus. In terms of biological role, component of the nascent polypeptide-associated complex (NAC), a dynamic component of the ribosomal exit tunnel, protecting the emerging polypeptides from interaction with other cytoplasmic proteins to ensure appropriate nascent protein targeting. The NAC complex also promotes mitochondrial protein import by enhancing productive ribosome interactions with the outer mitochondrial membrane and blocks the inappropriate interaction of ribosomes translating non-secretory nascent polypeptides with translocation sites in the membrane of the endoplasmic reticulum. EGD2 may also be involved in transcription regulation. The sequence is that of Nascent polypeptide-associated complex subunit alpha (EGD2) from Gibberella zeae (strain ATCC MYA-4620 / CBS 123657 / FGSC 9075 / NRRL 31084 / PH-1) (Wheat head blight fungus).